Consider the following 325-residue polypeptide: Eukaryotic translation initiation factor 3 subunit I (325 aa).

WD repeat units lie at residues 8–47, 50–91, 144–183, and 186–225; these read GHERSITQIKYNREGDLLFTVAKDPIVNVWYSVNGERLGT, GHTG…ALLK, CNDSKITSAVWGPLGECIIAGHEGGELNQYSAKSGEVLVN, and EHSRQINDIQLSRDMTMFVTASKDNTAKLFDSTTLEHQKT. T219 is modified (phosphothreonine). K264 carries the post-translational modification N6-acetyllysine. Residue K282 forms a Glycyl lysine isopeptide (Lys-Gly) (interchain with G-Cter in ubiquitin) linkage. The WD 5 repeat unit spans residues 283-324; it reads GHFGPINSVAFHPDGKSYSSGGEDGYVRIHYFDPQYFEFEFE. Y308 carries the phosphotyrosine modification.

It belongs to the eIF-3 subunit I family. Component of the eukaryotic translation initiation factor 3 (eIF-3) complex, which is composed of 13 subunits: EIF3A, EIF3B, EIF3C, EIF3D, EIF3E, EIF3F, EIF3G, EIF3H, EIF3I, EIF3J, EIF3K, EIF3L and EIF3M. The eIF-3 complex appears to include 3 stable modules: module A is composed of EIF3A, EIF3B, EIF3G and EIF3I; module B is composed of EIF3F, EIF3H, and EIF3M; and module C is composed of EIF3C, EIF3D, EIF3E, EIF3K and EIF3L. EIF3C of module C binds EIF3B of module A and EIF3H of module B, thereby linking the three modules. EIF3J is a labile subunit that binds to the eIF-3 complex via EIF3B. The eIF-3 complex interacts with RPS6KB1 under conditions of nutrient depletion. Mitogenic stimulation leads to binding and activation of a complex composed of MTOR and RPTOR, leading to phosphorylation and release of RPS6KB1 and binding of EIF4B to eIF-3. In terms of processing, phosphorylated by TGF-beta type II receptor.

The protein localises to the cytoplasm. In terms of biological role, component of the eukaryotic translation initiation factor 3 (eIF-3) complex, which is required for several steps in the initiation of protein synthesis. The eIF-3 complex associates with the 40S ribosome and facilitates the recruitment of eIF-1, eIF-1A, eIF-2:GTP:methionyl-tRNAi and eIF-5 to form the 43S pre-initiation complex (43S PIC). The eIF-3 complex stimulates mRNA recruitment to the 43S PIC and scanning of the mRNA for AUG recognition. The eIF-3 complex is also required for disassembly and recycling of post-termination ribosomal complexes and subsequently prevents premature joining of the 40S and 60S ribosomal subunits prior to initiation. The eIF-3 complex specifically targets and initiates translation of a subset of mRNAs involved in cell proliferation, including cell cycling, differentiation and apoptosis, and uses different modes of RNA stem-loop binding to exert either translational activation or repression. The chain is Eukaryotic translation initiation factor 3 subunit I from Bos taurus (Bovine).